A 532-amino-acid chain; its full sequence is 3-hydroxy-3-methylglutaryl-coenzyme A reductase 1 (532 aa).

The helical transmembrane segment at 63–83 (FATVVYLVSLFAHPDAPATTT) threads the bilayer. Residues 77 to 117 (DAPATTTGDDDDGQGGSRRARPAAAEPAPMHGHGGGMMEAD) are linker. Positions 78–111 (APATTTGDDDDGQGGSRRARPAAAEPAPMHGHGG) are disordered. A compositionally biased stretch (low complexity) spans 98–107 (PAAAEPAPMH). Residues 118-532 (DEEIVAAVAS…SSKDVAKAAS (415 aa)) form a catalytic region. E211 acts as the Charge relay system in catalysis. The N-linked (GlcNAc...) asparagine glycan is linked to N275. Active-site charge relay system residues include K343 and D419. H517 (proton donor) is an active-site residue. Residue N521 is glycosylated (N-linked (GlcNAc...) asparagine).

Belongs to the HMG-CoA reductase family.

Its subcellular location is the endoplasmic reticulum membrane. The enzyme catalyses (R)-mevalonate + 2 NADP(+) + CoA = (3S)-3-hydroxy-3-methylglutaryl-CoA + 2 NADPH + 2 H(+). Its pathway is metabolic intermediate biosynthesis; (R)-mevalonate biosynthesis; (R)-mevalonate from acetyl-CoA: step 3/3. In terms of biological role, catalyzes the synthesis of mevalonate. The specific precursor of all isoprenoid compounds present in plants. The polypeptide is 3-hydroxy-3-methylglutaryl-coenzyme A reductase 1 (HMG1) (Oryza sativa subsp. japonica (Rice)).